Here is an 87-residue protein sequence, read N- to C-terminus: MSERNQRKVYQGRVVSDKMDKTITVVVETYKKDPIYGKRVKYSKKFKAHDENNQAKIGDIVKIMETRPLSATKRFRLVEVVEEAVII.

This sequence belongs to the universal ribosomal protein uS17 family. As to quaternary structure, part of the 30S ribosomal subunit.

Functionally, one of the primary rRNA binding proteins, it binds specifically to the 5'-end of 16S ribosomal RNA. This chain is Small ribosomal subunit protein uS17, found in Bacillus velezensis (strain DSM 23117 / BGSC 10A6 / LMG 26770 / FZB42) (Bacillus amyloliquefaciens subsp. plantarum).